A 248-amino-acid chain; its full sequence is Myelin protein P0 (248 aa).

The N-terminal stretch at 1–29 is a signal peptide; sequence MAPGAPSSSPSPILAALLFSSLVLSPALA. The region spanning 30–143 is the Ig-like V-type domain; the sequence is IVVYTDREIY…DIVGKTSQVT (114 aa). Residues 30–153 are Extracellular-facing; it reads IVVYTDREIY…LYVFEKVPTR (124 aa). Cysteines 50 and 127 form a disulfide. N122 carries an N-linked (GlcNAc...) (complex) asparagine glycan. The helical transmembrane segment at 154–179 threads the bilayer; the sequence is YGVVLGAVIGGILGVVLLLLLLFYLI. Residues 180-248 lie on the Cytoplasmic side of the membrane; the sequence is RYCWLRRQAA…GLGESRKDKK (69 aa). The residue at position 210 (S210) is a Phosphoserine; by PKC. The interval 222–248 is disordered; it reads MLDHSRSTKAASEKKSKGLGESRKDKK. Residues 224–248 show a composition bias toward basic and acidic residues; that stretch reads DHSRSTKAASEKKSKGLGESRKDKK. A phosphoserine mark is found at S226 and S228. S233 carries the phosphoserine; by PKC modification. A phosphoserine mark is found at S237 and S243.

Belongs to the myelin P0 protein family. Homodimer and homotetramer. N-glycosylated; contains sulfate-substituted glycan. As to expression, found only in peripheral nervous system Schwann cells.

Its subcellular location is the cell membrane. Its function is as follows. Is an adhesion molecule necessary for normal myelination in the peripheral nervous system. It mediates adhesion between adjacent myelin wraps and ultimately drives myelin compaction. The protein is Myelin protein P0 (Mpz) of Mus musculus (Mouse).